Reading from the N-terminus, the 117-residue chain is Glycine cleavage system H-like protein (117 aa).

The Lipoyl-binding domain occupies 21-103; it reads IVRLGLSSRM…ESEGWFVVLQ (83 aa). Lys-62 carries the N6-lipoyllysine modification.

It belongs to the GcvH family. (R)-lipoate is required as a cofactor.

This Chlamydia muridarum (strain MoPn / Nigg) protein is Glycine cleavage system H-like protein.